A 159-amino-acid polypeptide reads, in one-letter code: 2-C-methyl-D-erythritol 2,4-cyclodiphosphate synthase (159 aa).

A divalent metal cation-binding residues include D10 and H12. 4-CDP-2-C-methyl-D-erythritol 2-phosphate-binding positions include 10–12 and 37–38; these read DVH and HS. H45 is an a divalent metal cation binding site. Residues 59 to 61, 64 to 68, 103 to 109, 135 to 138, F142, and R145 contribute to the 4-CDP-2-C-methyl-D-erythritol 2-phosphate site; these read DIG, FPDTD, AQAPKML, and TTTE.

The protein belongs to the IspF family. In terms of assembly, homotrimer. It depends on a divalent metal cation as a cofactor.

It carries out the reaction 4-CDP-2-C-methyl-D-erythritol 2-phosphate = 2-C-methyl-D-erythritol 2,4-cyclic diphosphate + CMP. It participates in isoprenoid biosynthesis; isopentenyl diphosphate biosynthesis via DXP pathway; isopentenyl diphosphate from 1-deoxy-D-xylulose 5-phosphate: step 4/6. In terms of biological role, involved in the biosynthesis of isopentenyl diphosphate (IPP) and dimethylallyl diphosphate (DMAPP), two major building blocks of isoprenoid compounds. Catalyzes the conversion of 4-diphosphocytidyl-2-C-methyl-D-erythritol 2-phosphate (CDP-ME2P) to 2-C-methyl-D-erythritol 2,4-cyclodiphosphate (ME-CPP) with a corresponding release of cytidine 5-monophosphate (CMP). In Francisella tularensis subsp. novicida (strain U112), this protein is 2-C-methyl-D-erythritol 2,4-cyclodiphosphate synthase.